The sequence spans 156 residues: Small ribosomal subunit protein uS7 (156 aa).

The protein belongs to the universal ribosomal protein uS7 family. As to quaternary structure, part of the 30S ribosomal subunit. Contacts proteins S9 and S11.

Functionally, one of the primary rRNA binding proteins, it binds directly to 16S rRNA where it nucleates assembly of the head domain of the 30S subunit. Is located at the subunit interface close to the decoding center, probably blocks exit of the E-site tRNA. In Campylobacter curvus (strain 525.92), this protein is Small ribosomal subunit protein uS7.